Here is a 251-residue protein sequence, read N- to C-terminus: 3-deoxy-manno-octulosonate cytidylyltransferase (251 aa).

The protein belongs to the KdsB family.

The protein resides in the cytoplasm. The catalysed reaction is 3-deoxy-alpha-D-manno-oct-2-ulosonate + CTP = CMP-3-deoxy-beta-D-manno-octulosonate + diphosphate. It functions in the pathway nucleotide-sugar biosynthesis; CMP-3-deoxy-D-manno-octulosonate biosynthesis; CMP-3-deoxy-D-manno-octulosonate from 3-deoxy-D-manno-octulosonate and CTP: step 1/1. The protein operates within bacterial outer membrane biogenesis; lipopolysaccharide biosynthesis. Functionally, activates KDO (a required 8-carbon sugar) for incorporation into bacterial lipopolysaccharide in Gram-negative bacteria. The sequence is that of 3-deoxy-manno-octulosonate cytidylyltransferase from Rhizobium johnstonii (strain DSM 114642 / LMG 32736 / 3841) (Rhizobium leguminosarum bv. viciae).